The chain runs to 496 residues: probable leucine aminopeptidase 2 (496 aa).

A signal peptide spans 1–16 (MRSLLWASLLSGVLAG). The PA domain occupies 111–205 (PSVEVTADVA…SLEDGQKLIK (95 aa)). An N-linked (GlcNAc...) asparagine glycan is attached at asparagine 224. Zn(2+) is bound by residues histidine 248 and aspartate 260. The active-site Proton acceptor is the glutamate 292. Residue glutamate 293 coordinates Zn(2+). Asparagine 307 carries N-linked (GlcNAc...) asparagine glycosylation. Position 321 (aspartate 321) interacts with Zn(2+). Residues asparagine 341 and asparagine 402 are each glycosylated (N-linked (GlcNAc...) asparagine). Residue histidine 419 participates in Zn(2+) binding. Residues asparagine 424 and asparagine 458 are each glycosylated (N-linked (GlcNAc...) asparagine). The interval 475–496 (KRAPKTHAHVSGSGCWHSQVEA) is disordered.

The protein belongs to the peptidase M28 family. M28A subfamily. As to quaternary structure, monomer. It depends on Zn(2+) as a cofactor.

The protein localises to the secreted. Functionally, extracellular aminopeptidase that releases a wide variety of amino acids from natural peptides. This Aspergillus oryzae (strain ATCC 42149 / RIB 40) (Yellow koji mold) protein is probable leucine aminopeptidase 2 (lap2).